The sequence spans 462 residues: F-box/LRR-repeat protein At5g38396 (462 aa).

In terms of domain architecture, F-box spans 1-47; that stretch reads MDLLRNIPDELICHILSFLTTKEAALTSVLSKRWRNLLAFVSNLHID. LRR repeat units lie at residues 118–146, 148–175, 197–222, 302–333, and 334–359; these read SIDL…KLHR, CIGQ…ELDY, VDAF…TMSS, CLDL…SIKS, and AENR…VLEG.

The protein is F-box/LRR-repeat protein At5g38396 of Arabidopsis thaliana (Mouse-ear cress).